Reading from the N-terminus, the 125-residue chain is Small ribosomal subunit protein eS8 (125 aa).

The protein belongs to the eukaryotic ribosomal protein eS8 family. As to quaternary structure, part of the 30S ribosomal subunit.

The sequence is that of Small ribosomal subunit protein eS8 from Methanosarcina mazei (strain ATCC BAA-159 / DSM 3647 / Goe1 / Go1 / JCM 11833 / OCM 88) (Methanosarcina frisia).